Consider the following 543-residue polypeptide: Ipecac alkaloid beta-glucosidase 3 (543 aa).

Residues Gln36, His140, 185 to 186 (NE), Tyr350, Glu422, Trp471, and Phe487 contribute to the a beta-D-glucoside site. Glu186 serves as the catalytic Proton donor. Residue Glu422 is the Nucleophile of the active site.

The protein belongs to the glycosyl hydrolase 1 family.

Its subcellular location is the cytoplasm. The protein localises to the cytosol. It carries out the reaction deacetylipecoside + H2O = deacetylipecoside aglycone + D-glucose. The enzyme catalyses deacetylisoipecoside + H2O = deacetylisoipecoside aglycone + D-glucose. It functions in the pathway alkaloid biosynthesis. Its function is as follows. Beta-glucosidase catalyzing deglucosylation on N-deacetylisoipecoside and N-deacetylipecoside. The sequence is that of Ipecac alkaloid beta-glucosidase 3 from Carapichea ipecacuanha (Ipecac).